Reading from the N-terminus, the 364-residue chain is S-adenosylmethionine:tRNA ribosyltransferase-isomerase (364 aa).

The protein belongs to the QueA family. As to quaternary structure, monomer.

The protein resides in the cytoplasm. The catalysed reaction is 7-aminomethyl-7-carbaguanosine(34) in tRNA + S-adenosyl-L-methionine = epoxyqueuosine(34) in tRNA + adenine + L-methionine + 2 H(+). It functions in the pathway tRNA modification; tRNA-queuosine biosynthesis. In terms of biological role, transfers and isomerizes the ribose moiety from AdoMet to the 7-aminomethyl group of 7-deazaguanine (preQ1-tRNA) to give epoxyqueuosine (oQ-tRNA). In Lachnoclostridium phytofermentans (strain ATCC 700394 / DSM 18823 / ISDg) (Clostridium phytofermentans), this protein is S-adenosylmethionine:tRNA ribosyltransferase-isomerase.